A 444-amino-acid polypeptide reads, in one-letter code: Serine--tRNA ligase (444 aa).

249 to 251 is an L-serine binding site; that stretch reads TAE. ATP is bound by residues 280 to 282 and valine 296; that span reads RRE. Residue glutamate 303 participates in L-serine binding. 367 to 370 contributes to the ATP binding site; that stretch reads EIVS. Threonine 401 contacts L-serine.

The protein belongs to the class-II aminoacyl-tRNA synthetase family. Type-1 seryl-tRNA synthetase subfamily. In terms of assembly, homodimer. The tRNA molecule binds across the dimer.

Its subcellular location is the cytoplasm. The catalysed reaction is tRNA(Ser) + L-serine + ATP = L-seryl-tRNA(Ser) + AMP + diphosphate + H(+). The enzyme catalyses tRNA(Sec) + L-serine + ATP = L-seryl-tRNA(Sec) + AMP + diphosphate + H(+). Its pathway is aminoacyl-tRNA biosynthesis; selenocysteinyl-tRNA(Sec) biosynthesis; L-seryl-tRNA(Sec) from L-serine and tRNA(Sec): step 1/1. Functionally, catalyzes the attachment of serine to tRNA(Ser). Is also able to aminoacylate tRNA(Sec) with serine, to form the misacylated tRNA L-seryl-tRNA(Sec), which will be further converted into selenocysteinyl-tRNA(Sec). This is Serine--tRNA ligase from Picrophilus torridus (strain ATCC 700027 / DSM 9790 / JCM 10055 / NBRC 100828 / KAW 2/3).